The chain runs to 397 residues: Cysteine desulfurase (397 aa).

Residues Asn148, Gln176, and 196–198 contribute to the pyridoxal 5'-phosphate site; that span reads SAH. Lys199 bears the N6-(pyridoxal phosphate)lysine mark. Thr234 contributes to the pyridoxal 5'-phosphate binding site. Residue Cys321 is the Cysteine persulfide intermediate of the active site. Cys321 is a [2Fe-2S] cluster binding site.

The protein belongs to the class-V pyridoxal-phosphate-dependent aminotransferase family. NifS/IscS subfamily. Homodimer. Pyridoxal 5'-phosphate is required as a cofactor.

The catalysed reaction is (sulfur carrier)-H + L-cysteine = (sulfur carrier)-SH + L-alanine. In terms of biological role, catalyzes the removal of elemental sulfur atoms from cysteine to produce alanine. Seems to participate in the biosynthesis of the nitrogenase metalloclusters by providing the inorganic sulfur required for the Fe-S core formation. This is Cysteine desulfurase from Klebsiella pneumoniae.